The chain runs to 740 residues: Isocitrate dehydrogenase [NADP] 2 (740 aa).

Positions 83 and 85 each coordinate NADP(+). The D-threo-isocitrate site is built by S130, N133, R137, R143, and K253. N133 contacts NADP(+). Residue D348 coordinates Mg(2+). D-threo-isocitrate is bound by residues Y418 and R546. Positions 547 and 551 each coordinate Mg(2+). Residues S584, H588, R599, D601, and R648 each contribute to the NADP(+) site.

It belongs to the monomeric-type IDH family. Monomer. It depends on Mg(2+) as a cofactor. Requires Mn(2+) as cofactor.

It catalyses the reaction D-threo-isocitrate + NADP(+) = 2-oxoglutarate + CO2 + NADPH. Its activity is regulated as follows. IDH activity is not significantly affected by monovalent cations. The combined addition of Mn(2+) and another divalent cation results in the decrease of the activity. In terms of biological role, catalyzes the oxidative decarboxylation of isocitrate to 2-oxoglutarate and carbon dioxide with the concomitant reduction of NADP(+). Cannot use NAD(+). The polypeptide is Isocitrate dehydrogenase [NADP] 2 (Psychrobacter sp. (strain 13A)).